Consider the following 906-residue polypeptide: Protein translocase subunit SecA (906 aa).

ATP is bound by residues glutamine 89, 107-111 (GEGKT), and aspartate 501. The Zn(2+) site is built by cysteine 891, cysteine 893, cysteine 902, and histidine 903.

This sequence belongs to the SecA family. As to quaternary structure, monomer and homodimer. Part of the essential Sec protein translocation apparatus which comprises SecA, SecYEG and auxiliary proteins SecDF-YajC and YidC. Zn(2+) serves as cofactor.

The protein localises to the cell inner membrane. The protein resides in the cytoplasm. The enzyme catalyses ATP + H2O + cellular proteinSide 1 = ADP + phosphate + cellular proteinSide 2.. Functionally, part of the Sec protein translocase complex. Interacts with the SecYEG preprotein conducting channel. Has a central role in coupling the hydrolysis of ATP to the transfer of proteins into and across the cell membrane, serving both as a receptor for the preprotein-SecB complex and as an ATP-driven molecular motor driving the stepwise translocation of polypeptide chains across the membrane. In Parvibaculum lavamentivorans (strain DS-1 / DSM 13023 / NCIMB 13966), this protein is Protein translocase subunit SecA.